The primary structure comprises 908 residues: DNA polymerase I (908 aa).

One can recognise a 5'-3' exonuclease domain in the interval 1–318 (MKELYLIDAL…DDINTIDTEN (318 aa)). The 3'-5' exonuclease domain maps to 319–531 (VKYRSITTKI…MEENGIYLDK (213 aa)). The polymerase stretch occupies residues 532 to 908 (EYLKEYGKEL…ETGKSWGEIH (377 aa)).

It belongs to the DNA polymerase type-A family.

It catalyses the reaction DNA(n) + a 2'-deoxyribonucleoside 5'-triphosphate = DNA(n+1) + diphosphate. Its function is as follows. In addition to polymerase activity, this DNA polymerase exhibits 3'-5' and 5'-3' exonuclease activity. In Borreliella burgdorferi (strain ATCC 35210 / DSM 4680 / CIP 102532 / B31) (Borrelia burgdorferi), this protein is DNA polymerase I (polA).